A 665-amino-acid chain; its full sequence is DNA ligase (665 aa).

Residues 31–35, 80–81, and E111 each bind NAD(+); these read DEEFD and SL. K113 acts as the N6-AMP-lysine intermediate in catalysis. NAD(+) contacts are provided by R134, E171, K287, and K311. Zn(2+)-binding residues include C405, C408, C423, and C429. A BRCT domain is found at 588 to 665; it reads FTNHAFQGKI…NEKEFISLCH (78 aa).

It belongs to the NAD-dependent DNA ligase family. LigA subfamily. The cofactor is Mg(2+). Mn(2+) serves as cofactor.

It catalyses the reaction NAD(+) + (deoxyribonucleotide)n-3'-hydroxyl + 5'-phospho-(deoxyribonucleotide)m = (deoxyribonucleotide)n+m + AMP + beta-nicotinamide D-nucleotide.. Functionally, DNA ligase that catalyzes the formation of phosphodiester linkages between 5'-phosphoryl and 3'-hydroxyl groups in double-stranded DNA using NAD as a coenzyme and as the energy source for the reaction. It is essential for DNA replication and repair of damaged DNA. The protein is DNA ligase of Protochlamydia amoebophila (strain UWE25).